Reading from the N-terminus, the 114-residue chain is Ribosome-binding factor A (114 aa).

The protein belongs to the RbfA family. As to quaternary structure, monomer. Binds 30S ribosomal subunits, but not 50S ribosomal subunits or 70S ribosomes.

The protein localises to the cytoplasm. One of several proteins that assist in the late maturation steps of the functional core of the 30S ribosomal subunit. Associates with free 30S ribosomal subunits (but not with 30S subunits that are part of 70S ribosomes or polysomes). Required for efficient processing of 16S rRNA. May interact with the 5'-terminal helix region of 16S rRNA. This chain is Ribosome-binding factor A, found in Phytoplasma mali (strain AT).